The sequence spans 236 residues: 2-C-methyl-D-erythritol 4-phosphate cytidylyltransferase (236 aa).

Belongs to the IspD/TarI cytidylyltransferase family. IspD subfamily.

It carries out the reaction 2-C-methyl-D-erythritol 4-phosphate + CTP + H(+) = 4-CDP-2-C-methyl-D-erythritol + diphosphate. It participates in isoprenoid biosynthesis; isopentenyl diphosphate biosynthesis via DXP pathway; isopentenyl diphosphate from 1-deoxy-D-xylulose 5-phosphate: step 2/6. Functionally, catalyzes the formation of 4-diphosphocytidyl-2-C-methyl-D-erythritol from CTP and 2-C-methyl-D-erythritol 4-phosphate (MEP). The protein is 2-C-methyl-D-erythritol 4-phosphate cytidylyltransferase of Paraburkholderia phymatum (strain DSM 17167 / CIP 108236 / LMG 21445 / STM815) (Burkholderia phymatum).